The sequence spans 146 residues: Shadow of prion protein (146 aa).

A signal peptide spans 1–24 (MRGTSAVCWSLLLLIALLSQNVTA). Asparagine 94 is a glycosylation site (N-linked (GlcNAc...) asparagine). A lipid anchor (GPI-anchor amidated serine) is attached at serine 108. The propeptide at 109-146 (GTCPLSSHLSFRLIISIGAILTCSSSSIYVSTKINLGK) is removed in mature form.

It belongs to the SPRN family.

Its subcellular location is the cell membrane. Its function is as follows. Prion-like protein that has PrP(C)-like neuroprotective activity. In Xenopus tropicalis (Western clawed frog), this protein is Shadow of prion protein (sprn).